Consider the following 427-residue polypeptide: MKIQNVNAIEILDSRGNPTVEVNLKLEDGTISRAMVPSGASTGEREATELRDGDKKRYGGKGVLKAVENVNSAIAKAIENKHFTNQRELDYFLIELDETNNKSKLGANAILGVSMAFARAKAQSSRTPLYQYLGGSNAHIMPVPCMNVINGGKHADNTIDFQEFMIAPHNAPSFRESIRMGEEVFHALKAVLKLKGLSTGVGDEGGFAPDLKSNEQAVEMILEGITKAGYKPSVDVSICLDPASSEMWENGKYKFFKSTQKLVSSDEMVKLWESWVNQYPIVLLEDGMAENDWEGWKNLTDVIGNKIEIVGDDLFCTNKSILLNGINKGVANSILIKLNQIGTVTETLETIELAYKNSYNCFVSHRSGETVDSFIADLTVGINAGHLKSGSGCRGERIEKFNQLMRIENELGKSAQFAGLKAFKNAK.

Q162 serves as a coordination point for (2R)-2-phosphoglycerate. The active-site Proton donor is the E204. The Mg(2+) site is built by D241, E285, and D312. Residues K337, R366, S367, and K388 each coordinate (2R)-2-phosphoglycerate. The active-site Proton acceptor is the K337.

The protein belongs to the enolase family. Mg(2+) is required as a cofactor.

The protein localises to the cytoplasm. The protein resides in the secreted. Its subcellular location is the cell surface. It catalyses the reaction (2R)-2-phosphoglycerate = phosphoenolpyruvate + H2O. The protein operates within carbohydrate degradation; glycolysis; pyruvate from D-glyceraldehyde 3-phosphate: step 4/5. In terms of biological role, catalyzes the reversible conversion of 2-phosphoglycerate (2-PG) into phosphoenolpyruvate (PEP). It is essential for the degradation of carbohydrates via glycolysis. This Chlorobaculum tepidum (strain ATCC 49652 / DSM 12025 / NBRC 103806 / TLS) (Chlorobium tepidum) protein is Enolase 1.